The following is a 256-amino-acid chain: UstYa family oxidase phomYc (256 aa).

The helical transmembrane segment at 38-58 (LVLVLQFVLIISLLASLHILG) threads the bilayer. Residues Asn64 and Asn132 are each glycosylated (N-linked (GlcNAc...) asparagine). An HXXHC 1 motif is present at residues 158 to 162 (HQLHC). An N-linked (GlcNAc...) asparagine glycan is attached at Asn179. Positions 193-197 (HIDHC) match the HXXHC 2 motif.

Belongs to the ustYa family.

Its subcellular location is the membrane. The protein operates within mycotoxin biosynthesis. UstYa family oxidase; part of the gene cluster that mediates the biosynthesis of the phomopsins, a group of hexapeptide mycotoxins which infects lupins and causes lupinosis disease in livestock. Within the pathway, phomYc catalyzes the desaturation of the Ile moiety into 2,3-dehydroisoleucine (dIle). The pathway starts with the processing of the precursor phomA by several endopeptidases including kexin proteases as well as the cluster-specific S41 family peptidase phomP1 and the oligopeptidase phomG to produce 10 identical copies of the hexapeptide Tyr-Val-Ile-Pro-Ile-Asp. After being excised from the precursor peptide, the core peptides are cyclized and modified post-translationally by enzymes encoded within the gene cluster. The timing and order of proteolysis of the phomA precursor and PTMs are still unknown. Two tyrosinase-like enzymes, phomQ1 and phomQ2, catalyze the chlorination and hydroxylation of Tyr, respectively. PhomYb, is proposed to be involved in the construction of the macrocyclic structure. The other 4 ustYa family proteins may be involved in PTMs that generate the unique structure of phomopsin A. PhomYa is required for the hydroxylation of C-beta of Tyr. PhomYc, phomYd, and phomYe are responsible for the biosynthesis of 2,3-dehydroisoleucine (dIle), 2,3-dehydroaspartic acid (dAsp), and 3,4-dehydroproline (dPro), respectively. While dIle formation by phomYc is indispensable for the installation of dAsp by phomYd, the order of the other PTMs have not been elucidated yet. Most of the biosynthetic enzymes likely have broad substrate specificity, and thus, there might be a metabolic grid from a precursor to phomopsin A. The enzyme(s) responsible for the biosynthesis of 3,4-dehydrovaline (dVal) have also not been identified yet. Finally, phomM acts as an S-adenosylmethionine-dependent alpha-N-methyltransferase that catalyzes two successive N-methylation reactions, converting N-desmethyl-phomopsin A to phomopsin A and phomopsin A further to an N,N-dimethylated congener called phomopsin E. The polypeptide is UstYa family oxidase phomYc (Diaporthe leptostromiformis (Lupinosis disease fungus)).